The primary structure comprises 382 residues: Na(+)/H(+) antiporter NhaA 1 (382 aa).

Transmembrane regions (helical) follow at residues 10-30 (EFSI…NISP), 45-65 (FSFH…IAAA), 87-107 (LLAT…LNAL), 116-136 (GWGI…SLVF), 145-165 (FLLL…ALFY), 170-190 (LPAA…AALL), 211-231 (AGLF…VPFL), 252-272 (LASF…LFGL), 275-295 (AGVT…SLVI), 326-346 (LVGL…GEAF), and 353-373 (GAAK…LAAG).

Belongs to the NhaA Na(+)/H(+) (TC 2.A.33) antiporter family.

The protein resides in the cell inner membrane. It carries out the reaction Na(+)(in) + 2 H(+)(out) = Na(+)(out) + 2 H(+)(in). Functionally, na(+)/H(+) antiporter that extrudes sodium in exchange for external protons. The chain is Na(+)/H(+) antiporter NhaA 1 from Pelobacter propionicus (strain DSM 2379 / NBRC 103807 / OttBd1).